The sequence spans 513 residues: ATP synthase subunit alpha (513 aa).

Residue 169-176 coordinates ATP; sequence GDRQTGKT.

This sequence belongs to the ATPase alpha/beta chains family. As to quaternary structure, F-type ATPases have 2 components, CF(1) - the catalytic core - and CF(0) - the membrane proton channel. CF(1) has five subunits: alpha(3), beta(3), gamma(1), delta(1), epsilon(1). CF(0) has three main subunits: a(1), b(2) and c(9-12). The alpha and beta chains form an alternating ring which encloses part of the gamma chain. CF(1) is attached to CF(0) by a central stalk formed by the gamma and epsilon chains, while a peripheral stalk is formed by the delta and b chains.

The protein localises to the cell inner membrane. The catalysed reaction is ATP + H2O + 4 H(+)(in) = ADP + phosphate + 5 H(+)(out). Produces ATP from ADP in the presence of a proton gradient across the membrane. The alpha chain is a regulatory subunit. This chain is ATP synthase subunit alpha, found in Shigella boydii serotype 18 (strain CDC 3083-94 / BS512).